The primary structure comprises 586 residues: Asparagine synthetase [glutamine-hydrolyzing] (586 aa).

The active-site For GATase activity is the C2. The Glutamine amidotransferase type-2 domain occupies 2–185 (CGILAVLGVV…PGHLYSSKTG (184 aa)). L-glutamine is bound by residues 50–54 (RLAII), 75–77 (NGE), and D98. Positions 193-516 (PPWFSETVPS…PQDSARETVP (324 aa)) constitute an Asparagine synthetase domain. ATP-binding positions include L231, I267, and 341–342 (SG).

The catalysed reaction is L-aspartate + L-glutamine + ATP + H2O = L-asparagine + L-glutamate + AMP + diphosphate + H(+). The protein operates within amino-acid biosynthesis; L-asparagine biosynthesis; L-asparagine from L-aspartate (L-Gln route): step 1/1. Its function is as follows. Essential for nitrogen assimilation, distribution and remobilization within the plant via the phloem. The chain is Asparagine synthetase [glutamine-hydrolyzing] (ASN1) from Zea mays (Maize).